A 249-amino-acid chain; its full sequence is MLLIPAIDLKDGHCVRLKQGEMDDATVFSEDPAAMARHWIEQGARRLHLVDLNGAFAGKPKNGAAIRSIVDEVGDDIPVQLGGGVRDLDTIEHYLDNGISYIIIGTAAVKNPGFLHDACGAFPGHIIVGLDARDGKVAVDGWSKMTGHDVVDLAKKYEDYGVEAVIYTDIGRDGMLSGVNVEATVRLAQALRIPVIASGGIASIADIDALCAVEAEGIMGAITGRAIYEGALDFAVAQARADELNGGEG.

The Proton acceptor role is filled by Asp-8. Asp-131 (proton donor) is an active-site residue.

The protein belongs to the HisA/HisF family.

The protein resides in the cytoplasm. The enzyme catalyses 1-(5-phospho-beta-D-ribosyl)-5-[(5-phospho-beta-D-ribosylamino)methylideneamino]imidazole-4-carboxamide = 5-[(5-phospho-1-deoxy-D-ribulos-1-ylimino)methylamino]-1-(5-phospho-beta-D-ribosyl)imidazole-4-carboxamide. Its pathway is amino-acid biosynthesis; L-histidine biosynthesis; L-histidine from 5-phospho-alpha-D-ribose 1-diphosphate: step 4/9. This is 1-(5-phosphoribosyl)-5-[(5-phosphoribosylamino)methylideneamino] imidazole-4-carboxamide isomerase from Aromatoleum aromaticum (strain DSM 19018 / LMG 30748 / EbN1) (Azoarcus sp. (strain EbN1)).